Reading from the N-terminus, the 369-residue chain is Extracellular signal-regulated kinase 2 (369 aa).

Residues 14–304 enclose the Protein kinase domain; that stretch reads YEVLQKIGKG…AEEALAHPFV (291 aa). Residues 20 to 28 and lysine 43 contribute to the ATP site; that span reads IGKGAYGIV. Aspartate 137 (proton acceptor) is an active-site residue. Threonine 176 bears the Phosphothreonine mark. The short motif at 176 to 178 is the TXY element; it reads TEY. Tyrosine 178 is subject to Phosphotyrosine. The segment at 346-369 is disordered; that stretch reads KKKEERKKQTNPTKPDTTAPTLST. Residues 355 to 369 are compositionally biased toward polar residues; it reads TNPTKPDTTAPTLST.

This sequence belongs to the protein kinase superfamily. CMGC Ser/Thr protein kinase family. MAP kinase subfamily. The cofactor is Mg(2+). Post-translationally, dually phosphorylated on Thr-176 and Tyr-178, which activates the enzyme.

The catalysed reaction is L-seryl-[protein] + ATP = O-phospho-L-seryl-[protein] + ADP + H(+). It catalyses the reaction L-threonyl-[protein] + ATP = O-phospho-L-threonyl-[protein] + ADP + H(+). Its activity is regulated as follows. Activated by tyrosine and threonine phosphorylation. Functionally, implicated in the relay of the cAMP chemotactic signal and cell differentiation. Important for receptor-mediated activation of adenylyl cyclase. The polypeptide is Extracellular signal-regulated kinase 2 (erkB) (Dictyostelium discoideum (Social amoeba)).